A 249-amino-acid chain; its full sequence is Protection of telomeres protein poz1 (249 aa).

Interacts with pot1, rap1 and tpz1.

The protein resides in the cytoplasm. The protein localises to the nucleus. Its subcellular location is the chromosome. It localises to the telomere. In terms of biological role, telomeric DNA-binding protein that negatively regulates telomerase and telomere length. The sequence is that of Protection of telomeres protein poz1 (poz1) from Schizosaccharomyces pombe (strain 972 / ATCC 24843) (Fission yeast).